Here is a 179-residue protein sequence, read N- to C-terminus: Adenine phosphoribosyltransferase (179 aa).

Belongs to the purine/pyrimidine phosphoribosyltransferase family. As to quaternary structure, homodimer.

It is found in the cytoplasm. The catalysed reaction is AMP + diphosphate = 5-phospho-alpha-D-ribose 1-diphosphate + adenine. It functions in the pathway purine metabolism; AMP biosynthesis via salvage pathway; AMP from adenine: step 1/1. Its function is as follows. Catalyzes a salvage reaction resulting in the formation of AMP, that is energically less costly than de novo synthesis. The polypeptide is Adenine phosphoribosyltransferase (Beijerinckia indica subsp. indica (strain ATCC 9039 / DSM 1715 / NCIMB 8712)).